The chain runs to 496 residues: Probable cytosol aminopeptidase (496 aa).

Mn(2+) contacts are provided by Lys-266 and Asp-271. Lys-278 is an active-site residue. The Mn(2+) site is built by Asp-290, Asp-349, and Glu-351. The active site involves Arg-353.

This sequence belongs to the peptidase M17 family. The cofactor is Mn(2+).

It is found in the cytoplasm. The enzyme catalyses Release of an N-terminal amino acid, Xaa-|-Yaa-, in which Xaa is preferably Leu, but may be other amino acids including Pro although not Arg or Lys, and Yaa may be Pro. Amino acid amides and methyl esters are also readily hydrolyzed, but rates on arylamides are exceedingly low.. The catalysed reaction is Release of an N-terminal amino acid, preferentially leucine, but not glutamic or aspartic acids.. Its function is as follows. Presumably involved in the processing and regular turnover of intracellular proteins. Catalyzes the removal of unsubstituted N-terminal amino acids from various peptides. The sequence is that of Probable cytosol aminopeptidase from Trichodesmium erythraeum (strain IMS101).